The chain runs to 406 residues: NADH-quinone oxidoreductase subunit D (406 aa).

This sequence belongs to the complex I 49 kDa subunit family. In terms of assembly, NDH-1 is composed of 14 different subunits. Subunits NuoB, C, D, E, F, and G constitute the peripheral sector of the complex.

The protein resides in the cell inner membrane. The catalysed reaction is a quinone + NADH + 5 H(+)(in) = a quinol + NAD(+) + 4 H(+)(out). Functionally, NDH-1 shuttles electrons from NADH, via FMN and iron-sulfur (Fe-S) centers, to quinones in the respiratory chain. The immediate electron acceptor for the enzyme in this species is believed to be ubiquinone. Couples the redox reaction to proton translocation (for every two electrons transferred, four hydrogen ions are translocated across the cytoplasmic membrane), and thus conserves the redox energy in a proton gradient. This Leptospira biflexa serovar Patoc (strain Patoc 1 / Ames) protein is NADH-quinone oxidoreductase subunit D.